A 302-amino-acid polypeptide reads, in one-letter code: Recombination-associated protein RdgC (302 aa).

This sequence belongs to the RdgC family.

The protein resides in the cytoplasm. It localises to the nucleoid. May be involved in recombination. The protein is Recombination-associated protein RdgC of Xylella fastidiosa (strain 9a5c).